Here is a 210-residue protein sequence, read N- to C-terminus: Probable nicotinate-nucleotide adenylyltransferase (210 aa).

This sequence belongs to the NadD family.

The catalysed reaction is nicotinate beta-D-ribonucleotide + ATP + H(+) = deamido-NAD(+) + diphosphate. Its pathway is cofactor biosynthesis; NAD(+) biosynthesis; deamido-NAD(+) from nicotinate D-ribonucleotide: step 1/1. In terms of biological role, catalyzes the reversible adenylation of nicotinate mononucleotide (NaMN) to nicotinic acid adenine dinucleotide (NaAD). This chain is Probable nicotinate-nucleotide adenylyltransferase, found in Streptococcus pyogenes serotype M6 (strain ATCC BAA-946 / MGAS10394).